A 430-amino-acid chain; its full sequence is Protein translocase subunit SecY (430 aa).

10 helical membrane-spanning segments follow: residues Val18 to Gly38, Phe67 to Leu87, Ile118 to Gly138, Val145 to Leu165, Gly177 to Ile197, Ile213 to Val233, Val270 to Phe290, Pro309 to Ile329, Phe369 to Ala389, and Asp390 to Leu410.

Belongs to the SecY/SEC61-alpha family. In terms of assembly, component of the Sec protein translocase complex. Heterotrimer consisting of SecY, SecE and SecG subunits. The heterotrimers can form oligomers, although 1 heterotrimer is thought to be able to translocate proteins. Interacts with the ribosome. Interacts with SecDF, and other proteins may be involved. Interacts with SecA.

It localises to the cell membrane. Functionally, the central subunit of the protein translocation channel SecYEG. Consists of two halves formed by TMs 1-5 and 6-10. These two domains form a lateral gate at the front which open onto the bilayer between TMs 2 and 7, and are clamped together by SecE at the back. The channel is closed by both a pore ring composed of hydrophobic SecY resides and a short helix (helix 2A) on the extracellular side of the membrane which forms a plug. The plug probably moves laterally to allow the channel to open. The ring and the pore may move independently. This is Protein translocase subunit SecY from Halalkalibacterium halodurans (strain ATCC BAA-125 / DSM 18197 / FERM 7344 / JCM 9153 / C-125) (Bacillus halodurans).